A 216-amino-acid chain; its full sequence is Phosphoenolpyruvate guanylyltransferase (216 aa).

Residues Thr143, Gly159, and Ser162 each contribute to the phosphoenolpyruvate site.

The protein belongs to the CofC family.

The catalysed reaction is phosphoenolpyruvate + GTP + H(+) = enolpyruvoyl-2-diphospho-5'-guanosine + diphosphate. It functions in the pathway cofactor biosynthesis; coenzyme F420 biosynthesis. In terms of biological role, guanylyltransferase that catalyzes the activation of phosphoenolpyruvate (PEP) as enolpyruvoyl-2-diphospho-5'-guanosine, via the condensation of PEP with GTP. It is involved in the biosynthesis of coenzyme F420, a hydride carrier cofactor. This chain is Phosphoenolpyruvate guanylyltransferase, found in Streptomyces scabiei (strain 87.22).